A 473-amino-acid chain; its full sequence is MTESAMTSRAGRGRGADLVAAVVQGHAAASDAAGDLSFPDGFIWGAATAAYQIEGAWREDGRGLWDVFSHTPGKVASGHTGDIACDHYHRYADDVRLMAGLGDRVYRFSVAWPRIVPDGSGPVNPAGLDFYDRLVDELLGHGITPYPTLYHWDLPQTLEDRGGWAARDTAYRFAEYALAVHRRLGDRVRCWITLNEPWVAAFLATHRGAPGAADVPRFRAVHHLLLGHGLGLRLRSAGAGQLGLTLSLSPVIEARPGVRGGGRRVDALANRQFLDPALRGRYPEEVLKIMAGHARLGHPGRDLETIHQPVDLLGVNYYSHVRLAAEGEPANRLPGSEGIRFERPTAVTAWPGDRPDGLRTLLLRLSRDYPGVGLIITENGAAFDDRADGDRVHDPERIRYLTATLRAVHDAIMAGADLRGYFVWSVLDNFEWAYGYHKRGIVYVDYTTMRRIPRESALWYRDVVRRNGLRNGE.

E196 serves as the catalytic Proton donor. E378 functions as the Nucleophile in the catalytic mechanism.

This sequence belongs to the glycosyl hydrolase 1 family.

It localises to the cytoplasm. The catalysed reaction is Hydrolysis of terminal, non-reducing beta-D-glucosyl residues with release of beta-D-glucose.. The sequence is that of Thermostable beta-glucosidase B (bglB) from Thermobispora bispora (Microbispora bispora).